A 1220-amino-acid polypeptide reads, in one-letter code: Plasma membrane calcium-transporting ATPase 1 (1220 aa).

The residue at position 2 (Gly2) is an N-acetylglycine. The Cytoplasmic portion of the chain corresponds to 2-105 (GDMANNSVVY…KTFLQLVWEA (104 aa)). A phosphoserine mark is found at Ser8 and Ser17. Residues 106-126 (LQDVTLIILEIAAIVSLGLSF) form a helical membrane-spanning segment. Over 127–154 (YQPPEGDNALCGEVSVGEEEGEGETGWI) the chain is Extracellular. A helical transmembrane segment spans residues 155-175 (EGAAILLSVVCVVLVTAFNDW). Residues 176–366 (SKEKQFRGLQ…KEKSVLQGKL (191 aa)) are Cytoplasmic-facing. A disordered region spans residues 297–356 (EEEKKDEKKKEKKNKKQDGAIENRNKAKAQDGEPMEMQPLKSEEGGDGDEKDKKKANLPK). 2 stretches are compositionally biased toward basic and acidic residues: residues 312–327 (KQDGAIENRNKAKAQD) and 337–356 (KSEEGGDGDEKDKKKANLPK). Ser338 bears the Phosphoserine mark. The chain crosses the membrane as a helical span at residues 367–386 (TKLAVQIGKAGLLMSAITVI). The Extracellular portion of the chain corresponds to 387-418 (ILVLYFLIDTFWVQKRPWLAECTPIYIQYFVK). Residues 419-439 (FFIIGVTVLVVAVPEGLPLPV) form a helical membrane-spanning segment. Over 440–855 (TISLAYSVNE…RNVYDSISKF (416 aa)) the chain is Cytoplasmic. Asp475 acts as the 4-aspartylphosphate intermediate in catalysis. Residues Asp475, Thr477, and Asp797 each coordinate Mg(2+). The helical transmembrane segment at 856-876 (LQFQLTVNVVAVIVAFTGACI) threads the bilayer. Over 877–882 (TQDSPL) the chain is Extracellular. The helical transmembrane segment at 883–903 (KAVQMLWVNLIMDTLASLALA) threads the bilayer. The Cytoplasmic segment spans residues 904–927 (TEPPTESLLLGKPYGRNKPLISRT). Residues 928–948 (MMKNILGHAFYQLVVVFTLLL) traverse the membrane as a helical segment. Topologically, residues 949–971 (AGEKFFDIDSGRNAPLHAPPSEH) are extracellular. A helical membrane pass occupies residues 972–991 (YTIVFNIFVLMQLFNEINAR). Residues 992–1005 (KIHGERNVFEGIFN) lie on the Cytoplasmic side of the membrane. A helical membrane pass occupies residues 1006-1027 (NAIFCTIVLGTFVVQIIIVQFA). Over 1028–1039 (GKPFSCSELSVE) the chain is Extracellular. Residues 1040–1060 (QWLWSIFLGMGTLLWGQLIST) traverse the membrane as a helical segment. Residues 1061–1220 (IPTSRLKFQK…SPLHSLETSL (160 aa)) are Cytoplasmic-facing. The calmodulin-binding subdomain A stretch occupies residues 1100–1117 (LRRWQILWFRGLNRIQTQ). Thr1116 bears the Phosphothreonine; by PKC mark. Positions 1118–1220 (IRVVNAFRSS…SPLHSLETSL (103 aa)) are required for basolateral membrane targeting. 2 positions are modified to phosphoserine: Ser1140 and Ser1155. Positions 1160 to 1220 (PLIDDTDAED…SPLHSLETSL (61 aa)) are disordered. Thr1165 is modified (phosphothreonine). Ser1177 is modified (phosphoserine; by PKA). 2 positions are modified to phosphoserine: Ser1178 and Ser1182. Over residues 1200-1220 (MNKSATSSSPGSPLHSLETSL) the composition is skewed to polar residues.

This sequence belongs to the cation transport ATPase (P-type) (TC 3.A.3) family. Type IIB subfamily. In terms of assembly, monomer. Dimer. Oligomer. Calmodulin binding. Interacts with PDZD11. Interacts with SLC35G1 and STIM1. Interacts with YWHAE; interacts with the monomeric and dimeric forms of the YWHAE but prefer the monomer form; this interaction inhibits calcium-transporting ATPase activity. Interacts with NPTN; this interaction stabilizes ATP2B1 and increases ATPase activity; this interaction controls T cell calcium homeostasis following T cell activation. Interacts with EPB41; regulates small intestinal calcium absorption through regulation of membrane expression of ATP2B1. In terms of tissue distribution, isoform B is ubiquitously expressed and is the most predominant isoform. Isoform C is expressed at much lower levels in all tissues tested, but liver, while isoform A is found only in aorta, brain and stomach.

It is found in the cell membrane. It localises to the basolateral cell membrane. The protein resides in the synapse. Its subcellular location is the presynaptic cell membrane. The protein localises to the cytoplasmic vesicle. It is found in the secretory vesicle. It localises to the synaptic vesicle membrane. The enzyme catalyses Ca(2+)(in) + ATP + H2O = Ca(2+)(out) + ADP + phosphate + H(+). Catalyzes the hydrolysis of ATP coupled with the transport of calcium from the cytoplasm to the extracellular space thereby maintaining intracellular calcium homeostasis. Plays a role in blood pressure regulation through regulation of intracellular calcium concentration and nitric oxide production leading to regulation of vascular smooth muscle cells vasoconstriction. Positively regulates bone mineralization through absorption of calcium from the intestine. Plays dual roles in osteoclast differentiation and survival by regulating RANKL-induced calcium oscillations in preosteoclasts and mediating calcium extrusion in mature osteoclasts. Regulates insulin sensitivity through calcium/calmodulin signaling pathway by regulating AKT1 activation and NOS3 activation in endothelial cells. May play a role in synaptic transmission by modulating calcium and proton dynamics at the synaptic vesicles. The sequence is that of Plasma membrane calcium-transporting ATPase 1 from Oryctolagus cuniculus (Rabbit).